Reading from the N-terminus, the 168-residue chain is Translationally-controlled tumor protein homolog (168 aa).

The TCTP domain occupies 1 to 168 (MLLYKDVISG…FKDGLVSEKF (168 aa)). Ser78 carries the post-translational modification Phosphoserine.

The protein belongs to the TCTP family.

Its subcellular location is the cytoplasm. Involved in calcium binding and microtubule stabilization. May be a guanine nucleotide-free chaperone (GFC). This Schizosaccharomyces pombe (strain 972 / ATCC 24843) (Fission yeast) protein is Translationally-controlled tumor protein homolog (p23fy).